The sequence spans 551 residues: Formate--tetrahydrofolate ligase (551 aa).

Residue 61–68 (TPAGEGKS) coordinates ATP.

The protein belongs to the formate--tetrahydrofolate ligase family.

The enzyme catalyses (6S)-5,6,7,8-tetrahydrofolate + formate + ATP = (6R)-10-formyltetrahydrofolate + ADP + phosphate. It functions in the pathway one-carbon metabolism; tetrahydrofolate interconversion. This Lactiplantibacillus plantarum (strain ATCC BAA-793 / NCIMB 8826 / WCFS1) (Lactobacillus plantarum) protein is Formate--tetrahydrofolate ligase.